Here is a 366-residue protein sequence, read N- to C-terminus: Alanine racemase (366 aa).

Lys35 serves as the catalytic Proton acceptor; specific for D-alanine. An N6-(pyridoxal phosphate)lysine modification is found at Lys35. Arg130 contacts substrate. Tyr254 functions as the Proton acceptor; specific for L-alanine in the catalytic mechanism. Substrate is bound at residue Met302.

The protein belongs to the alanine racemase family. It depends on pyridoxal 5'-phosphate as a cofactor.

It carries out the reaction L-alanine = D-alanine. The protein operates within amino-acid biosynthesis; D-alanine biosynthesis; D-alanine from L-alanine: step 1/1. Catalyzes the interconversion of L-alanine and D-alanine. May also act on other amino acids. This chain is Alanine racemase (alr), found in Variovorax paradoxus (strain S110).